Consider the following 165-residue polypeptide: Cystatin-like protein (165 aa).

An N-terminal signal peptide occupies residues 1–19 (MDVALKLLLLAALTLLASA). 2 cysteine pairs are disulfide-bonded: Cys-80-Cys-92 and Cys-104-Cys-118.

Its function is as follows. Involved in hypoxia tolerance. This Clarias batrachus (Walking catfish) protein is Cystatin-like protein.